The following is a 310-amino-acid chain: Eukaryotic translation initiation factor 3 subunit G (310 aa).

Disordered regions lie at residues 1-32 (MPTEDYDSKPSWADQVEEEGIDPEPISPPVTK) and 179-229 (TGDK…DDNA). The span at 187 to 196 (GAEPEPAQAP) shows a compositional bias: low complexity. Residues 211 to 229 (GGSRRGESMQPNRRADDNA) are compositionally biased toward basic and acidic residues. The region spanning 229-307 (ATIRVTNLSE…LILNVEWAKP (79 aa)) is the RRM domain.

Belongs to the eIF-3 subunit G family. As to quaternary structure, component of the eukaryotic translation initiation factor 3 (eIF-3) complex, which is composed of 13 subunits: eif3a, eif3b, eif3c, eif3d, eif3e, eif3f, eif3g, eif3h, eif3i, eif3j, eif3k, eif3l and eif3m.

Its subcellular location is the cytoplasm. RNA-binding component of the eukaryotic translation initiation factor 3 (eIF-3) complex, which is involved in protein synthesis of a specialized repertoire of mRNAs and, together with other initiation factors, stimulates binding of mRNA and methionyl-tRNAi to the 40S ribosome. The eIF-3 complex specifically targets and initiates translation of a subset of mRNAs involved in cell proliferation. This subunit can bind 18S rRNA. The sequence is that of Eukaryotic translation initiation factor 3 subunit G (eif3g) from Xenopus tropicalis (Western clawed frog).